We begin with the raw amino-acid sequence, 570 residues long: Sulfite reductase [NADPH] hemoprotein beta-component (570 aa).

[4Fe-4S] cluster is bound by residues Cys-434, Cys-440, Cys-479, and Cys-483. Residue Cys-483 coordinates siroheme.

It belongs to the nitrite and sulfite reductase 4Fe-4S domain family. As to quaternary structure, alpha(8)-beta(8). The alpha component is a flavoprotein, the beta component is a hemoprotein. Siroheme is required as a cofactor. [4Fe-4S] cluster serves as cofactor.

It carries out the reaction hydrogen sulfide + 3 NADP(+) + 3 H2O = sulfite + 3 NADPH + 4 H(+). It functions in the pathway sulfur metabolism; hydrogen sulfide biosynthesis; hydrogen sulfide from sulfite (NADPH route): step 1/1. In terms of biological role, component of the sulfite reductase complex that catalyzes the 6-electron reduction of sulfite to sulfide. This is one of several activities required for the biosynthesis of L-cysteine from sulfate. The chain is Sulfite reductase [NADPH] hemoprotein beta-component from Shigella flexneri.